The sequence spans 351 residues: Tropomodulin-2 (351 aa).

Position 25 is a phosphoserine (Ser25).

Belongs to the tropomodulin family. Binds to the N-terminus of tropomyosin and to actin. Binds to TMBr3 as well as to other low molecular mass tropomyosins (TM5a or TM5), but not to high molecular mass tropomyosins (TM2 or TMBr1). Neuronal-tissue specific.

It is found in the cytoplasm. It localises to the cytoskeleton. Blocks the elongation and depolymerization of the actin filaments at the pointed end. The Tmod/TM complex contributes to the formation of the short actin protofilament, which in turn defines the geometry of the membrane skeleton. The sequence is that of Tropomodulin-2 (Tmod2) from Rattus norvegicus (Rat).